A 116-amino-acid polypeptide reads, in one-letter code: NADH-quinone oxidoreductase subunit A (116 aa).

The next 3 helical transmembrane spans lie at 3–23 (FTLL…ALGI), 61–81 (FAIL…WAVV), and 85–105 (LGVY…LGLA).

Belongs to the complex I subunit 3 family. As to quaternary structure, NDH-1 is composed of 14 different subunits. Subunits NuoA, H, J, K, L, M, N constitute the membrane sector of the complex.

It is found in the cell inner membrane. The enzyme catalyses a quinone + NADH + 5 H(+)(in) = a quinol + NAD(+) + 4 H(+)(out). Its function is as follows. NDH-1 shuttles electrons from NADH, via FMN and iron-sulfur (Fe-S) centers, to quinones in the respiratory chain. The immediate electron acceptor for the enzyme in this species is believed to be a menaquinone. Couples the redox reaction to proton translocation (for every two electrons transferred, four hydrogen ions are translocated across the cytoplasmic membrane), and thus conserves the redox energy in a proton gradient. This Phocaeicola vulgatus (strain ATCC 8482 / DSM 1447 / JCM 5826 / CCUG 4940 / NBRC 14291 / NCTC 11154) (Bacteroides vulgatus) protein is NADH-quinone oxidoreductase subunit A.